A 446-amino-acid polypeptide reads, in one-letter code: N-succinylarginine dihydrolase (446 aa).

Substrate is bound by residues 19-28 (AGLSYGNVAS), N110, and 137-138 (HR). E174 is a catalytic residue. R214 provides a ligand contact to substrate. H250 is a catalytic residue. 2 residues coordinate substrate: D252 and N363. C369 acts as the Nucleophile in catalysis.

The protein belongs to the succinylarginine dihydrolase family. Homodimer.

It catalyses the reaction N(2)-succinyl-L-arginine + 2 H2O + 2 H(+) = N(2)-succinyl-L-ornithine + 2 NH4(+) + CO2. It functions in the pathway amino-acid degradation; L-arginine degradation via AST pathway; L-glutamate and succinate from L-arginine: step 2/5. In terms of biological role, catalyzes the hydrolysis of N(2)-succinylarginine into N(2)-succinylornithine, ammonia and CO(2). In Pseudoalteromonas atlantica (strain T6c / ATCC BAA-1087), this protein is N-succinylarginine dihydrolase.